Reading from the N-terminus, the 461-residue chain is Photosystem II CP43 reaction center protein (461 aa).

A propeptide spanning residues 1-2 (ME) is cleaved from the precursor. Residue T3 is modified to N-acetylthreonine. T3 carries the phosphothreonine modification. The next 5 membrane-spanning stretches (helical) occupy residues 57-81 (LFEVAHFVPEKPMYEQGLILLPHLA), 122-143 (LIGPETLEESFPFFGYVWKDKS), 166-188 (KSVYFGGVYDTWAPGGGDVRKIT), 243-263 (KPFAWARRAFVWSGEAYLSYS), and 279-300 (WFNNTAYPSEFYGPTGPEASQA). Residue E355 participates in [CaMn4O5] cluster binding. Residues 435–459 (RARAAAAGFEKGIDRDTEPVLSMTP) form a helical membrane-spanning segment.

It belongs to the PsbB/PsbC family. PsbC subfamily. PSII is composed of 1 copy each of membrane proteins PsbA, PsbB, PsbC, PsbD, PsbE, PsbF, PsbH, PsbI, PsbJ, PsbK, PsbL, PsbM, PsbT, PsbX, PsbY, PsbZ, Psb30/Ycf12, at least 3 peripheral proteins of the oxygen-evolving complex and a large number of cofactors. It forms dimeric complexes. Binds multiple chlorophylls and provides some of the ligands for the Ca-4Mn-5O cluster of the oxygen-evolving complex. It may also provide a ligand for a Cl- that is required for oxygen evolution. PSII binds additional chlorophylls, carotenoids and specific lipids. serves as cofactor.

It localises to the plastid. The protein resides in the chloroplast thylakoid membrane. Its function is as follows. One of the components of the core complex of photosystem II (PSII). It binds chlorophyll and helps catalyze the primary light-induced photochemical processes of PSII. PSII is a light-driven water:plastoquinone oxidoreductase, using light energy to abstract electrons from H(2)O, generating O(2) and a proton gradient subsequently used for ATP formation. In Psilotum nudum (Whisk fern), this protein is Photosystem II CP43 reaction center protein.